A 112-amino-acid polypeptide reads, in one-letter code: UPF0342 protein SUB0718 (112 aa).

It belongs to the UPF0342 family.

This is UPF0342 protein SUB0718 from Streptococcus uberis (strain ATCC BAA-854 / 0140J).